Reading from the N-terminus, the 389-residue chain is Carbamoyl phosphate synthase small chain (389 aa).

The segment at 1 to 197 (MMSSPAKAAK…AAKDASIGDD (197 aa)) is CPSase. L-glutamine is bound by residues Ser51, Gly249, and Gly251. The Glutamine amidotransferase type-1 domain occupies 201-387 (HVVCMDFGMK…QEQLNEKCGV (187 aa)). Cys276 (nucleophile) is an active-site residue. Residues Leu277, Gln280, Asn318, Gly320, and Phe321 each contribute to the L-glutamine site. Catalysis depends on residues His360 and Glu362.

It belongs to the CarA family. Composed of two chains; the small (or glutamine) chain promotes the hydrolysis of glutamine to ammonia, which is used by the large (or ammonia) chain to synthesize carbamoyl phosphate. Tetramer of heterodimers (alpha,beta)4.

It carries out the reaction hydrogencarbonate + L-glutamine + 2 ATP + H2O = carbamoyl phosphate + L-glutamate + 2 ADP + phosphate + 2 H(+). The catalysed reaction is L-glutamine + H2O = L-glutamate + NH4(+). Its pathway is amino-acid biosynthesis; L-arginine biosynthesis; carbamoyl phosphate from bicarbonate: step 1/1. The protein operates within pyrimidine metabolism; UMP biosynthesis via de novo pathway; (S)-dihydroorotate from bicarbonate: step 1/3. Its function is as follows. Small subunit of the glutamine-dependent carbamoyl phosphate synthetase (CPSase). CPSase catalyzes the formation of carbamoyl phosphate from the ammonia moiety of glutamine, carbonate, and phosphate donated by ATP, constituting the first step of 2 biosynthetic pathways, one leading to arginine and/or urea and the other to pyrimidine nucleotides. The small subunit (glutamine amidotransferase) binds and cleaves glutamine to supply the large subunit with the substrate ammonia. The protein is Carbamoyl phosphate synthase small chain of Rhodopirellula baltica (strain DSM 10527 / NCIMB 13988 / SH1).